Consider the following 1343-residue polypeptide: DNA-directed RNA polymerase subunit beta (1343 aa).

Belongs to the RNA polymerase beta chain family. In terms of assembly, the RNAP catalytic core consists of 2 alpha, 1 beta, 1 beta' and 1 omega subunit. When a sigma factor is associated with the core the holoenzyme is formed, which can initiate transcription.

The catalysed reaction is RNA(n) + a ribonucleoside 5'-triphosphate = RNA(n+1) + diphosphate. Functionally, DNA-dependent RNA polymerase catalyzes the transcription of DNA into RNA using the four ribonucleoside triphosphates as substrates. This chain is DNA-directed RNA polymerase subunit beta, found in Shewanella denitrificans (strain OS217 / ATCC BAA-1090 / DSM 15013).